Reading from the N-terminus, the 543-residue chain is Methionine--tRNA ligase (543 aa).

Residues 13–23 carry the 'HIGH' region motif; sequence PYANGPLHVGH. Residues cysteine 145, cysteine 148, cysteine 158, and cysteine 161 each contribute to the Zn(2+) site. The 'KMSKS' region signature appears at 334–338; sequence QFSKS. Lysine 337 is a binding site for ATP.

The protein belongs to the class-I aminoacyl-tRNA synthetase family. MetG type 1 subfamily. Zn(2+) is required as a cofactor.

It is found in the cytoplasm. The enzyme catalyses tRNA(Met) + L-methionine + ATP = L-methionyl-tRNA(Met) + AMP + diphosphate. In terms of biological role, is required not only for elongation of protein synthesis but also for the initiation of all mRNA translation through initiator tRNA(fMet) aminoacylation. In Thermoplasma volcanium (strain ATCC 51530 / DSM 4299 / JCM 9571 / NBRC 15438 / GSS1), this protein is Methionine--tRNA ligase.